Here is a 139-residue protein sequence, read N- to C-terminus: D-ribose pyranase (139 aa).

Residue histidine 20 is the Proton donor of the active site. Substrate contacts are provided by residues aspartate 28, histidine 106, and 128–130 (YAN).

This sequence belongs to the RbsD / FucU family. RbsD subfamily. As to quaternary structure, homodecamer.

The protein localises to the cytoplasm. It carries out the reaction beta-D-ribopyranose = beta-D-ribofuranose. It functions in the pathway carbohydrate metabolism; D-ribose degradation; D-ribose 5-phosphate from beta-D-ribopyranose: step 1/2. Functionally, catalyzes the interconversion of beta-pyran and beta-furan forms of D-ribose. This Aliivibrio fischeri (strain ATCC 700601 / ES114) (Vibrio fischeri) protein is D-ribose pyranase.